Reading from the N-terminus, the 59-residue chain is UPF0391 membrane protein lpg2521 (59 aa).

2 helical membrane-spanning segments follow: residues 5–25 (ALIF…GIAV) and 30–50 (IAKI…IMGL).

It belongs to the UPF0391 family.

The protein resides in the cell membrane. This Legionella pneumophila subsp. pneumophila (strain Philadelphia 1 / ATCC 33152 / DSM 7513) protein is UPF0391 membrane protein lpg2521.